Here is a 534-residue protein sequence, read N- to C-terminus: ATP synthase subunit alpha (534 aa).

Residue 170–177 participates in ATP binding; the sequence is GDRQTGKT. Positions 505 to 534 are disordered; that stretch reads HEDARVKSETAQAAGKDKDEKAAATAGAGK.

The protein belongs to the ATPase alpha/beta chains family. In terms of assembly, F-type ATPases have 2 components, CF(1) - the catalytic core - and CF(0) - the membrane proton channel. CF(1) has five subunits: alpha(3), beta(3), gamma(1), delta(1), epsilon(1). CF(0) has three main subunits: a(1), b(2) and c(9-12). The alpha and beta chains form an alternating ring which encloses part of the gamma chain. CF(1) is attached to CF(0) by a central stalk formed by the gamma and epsilon chains, while a peripheral stalk is formed by the delta and b chains.

The protein localises to the cell inner membrane. It carries out the reaction ATP + H2O + 4 H(+)(in) = ADP + phosphate + 5 H(+)(out). Produces ATP from ADP in the presence of a proton gradient across the membrane. The alpha chain is a regulatory subunit. The chain is ATP synthase subunit alpha from Acidobacterium capsulatum (strain ATCC 51196 / DSM 11244 / BCRC 80197 / JCM 7670 / NBRC 15755 / NCIMB 13165 / 161).